Reading from the N-terminus, the 108-residue chain is uncharacterized protein (108 aa).

This is an uncharacterized protein from Autographa californica nuclear polyhedrosis virus (AcMNPV).